The chain runs to 138 residues: Transcription antitermination protein NusB (138 aa).

This sequence belongs to the NusB family.

Involved in transcription antitermination. Required for transcription of ribosomal RNA (rRNA) genes. Binds specifically to the boxA antiterminator sequence of the ribosomal RNA (rrn) operons. This is Transcription antitermination protein NusB from Desulforudis audaxviator (strain MP104C).